The sequence spans 434 residues: Ribosomal protein uS12 methylthiotransferase RimO (434 aa).

The region spanning 2–112 (AKIGFVSLGC…VLEAVQVVLP (111 aa)) is the MTTase N-terminal domain. Residues C11, C47, C76, C142, C146, and C149 each contribute to the [4Fe-4S] cluster site. One can recognise a Radical SAM core domain in the interval 128–365 (LTPRHYAYVK…LELQARVSLR (238 aa)). The 67-residue stretch at 368-434 (QRFVGKTLEV…DTYDLHGVQA (67 aa)) folds into the TRAM domain.

This sequence belongs to the methylthiotransferase family. RimO subfamily. It depends on [4Fe-4S] cluster as a cofactor.

The protein resides in the cytoplasm. The enzyme catalyses L-aspartate(89)-[ribosomal protein uS12]-hydrogen + (sulfur carrier)-SH + AH2 + 2 S-adenosyl-L-methionine = 3-methylsulfanyl-L-aspartate(89)-[ribosomal protein uS12]-hydrogen + (sulfur carrier)-H + 5'-deoxyadenosine + L-methionine + A + S-adenosyl-L-homocysteine + 2 H(+). In terms of biological role, catalyzes the methylthiolation of an aspartic acid residue of ribosomal protein uS12. This chain is Ribosomal protein uS12 methylthiotransferase RimO, found in Thermus thermophilus (strain ATCC 27634 / DSM 579 / HB8).